A 495-amino-acid polypeptide reads, in one-letter code: Neuronal acetylcholine receptor subunit beta-4 (495 aa).

An N-terminal signal peptide occupies residues 1-20; it reads MRGTPLLLVSLFALLQPGDC. The Extracellular segment spans residues 21–235; it reads RLANAEEKLM…IIKRKPLFYT (215 aa). Residues N35, N92, N137, and N165 are each glycosylated (N-linked (GlcNAc...) asparagine). A disulfide bond links C152 and C166. Residues 236 to 256 form a helical membrane-spanning segment; that stretch reads INLIIPCVLITSLAILVFYLP. The Cytoplasmic segment spans residues 257-264; it reads SDCGEKMT. Residue E261 coordinates Na(+). The chain crosses the membrane as a helical span at residues 265 to 285; the sequence is LCISVLLALTFFLLLISKIVP. The Extracellular portion of the chain corresponds to 286 to 297; it reads PTSLDIPLIGKY. Residues 298–318 traverse the membrane as a helical segment; the sequence is LLFTMVLVTFSIVTTVCVLNV. Residues 319–463 are Cytoplasmic-facing; it reads HHRSPSTHTM…WKFVAMVVDR (145 aa). The helical transmembrane segment at 464–484 threads the bilayer; that stretch reads LFLWVFVIVCILGTMGLFLPP. At 485 to 495 the chain is on the extracellular side; sequence LFQIHAPSKGL.

This sequence belongs to the ligand-gated ion channel (TC 1.A.9) family. Acetylcholine receptor (TC 1.A.9.1) subfamily. Beta-4/CHRNB4 sub-subfamily. As to quaternary structure, neuronal AChR is composed of two different types of subunits: alpha and beta. CHRNB4/Beta-4 subunit can be combined to CHRNA2/alpha-2, CHRNA3/alpha-3 or CHRNA4/alpha-4, CHRNA5/alpha-5 and CHRNB3/beta-3 to give rise to functional receptors. Forms stoichiometries such as (CHRNA3)2:(CHRNB4)3 or (CHRNA3:CHRNB4)2:CHRNB3. Interacts with RIC3; which is required for proper folding and assembly. Interacts with LYPD6. As to expression, predominantly expressed by immature T-cells in the thymus.

It localises to the synaptic cell membrane. The protein resides in the cell membrane. It catalyses the reaction K(+)(in) = K(+)(out). The enzyme catalyses Na(+)(in) = Na(+)(out). It carries out the reaction Ca(2+)(in) = Ca(2+)(out). With respect to regulation, activated by a myriad of ligands such as acetylcholine, cytisine, nicotine, choline and epibatidine. The heteropentamer CHRNA3:CHRNB4 activity is blocked by the alpha-conotoxin ImI and AuIB. Component of neuronal acetylcholine receptors (nAChRs) that function as pentameric, ligand-gated cation channels with high calcium permeability among other activities. nAChRs are excitatory neurotrasnmitter receptors formed by a collection of nAChR subunits known to mediate synaptic transmission in the nervous system and the neuromuscular junction. Each nAchR subunit confers differential attributes to channel properties, including activation, deactivation and desensitization kinetics, pH sensitivity, cation permeability, and binding to allosteric modulators. CHRNB4 forms heteropentameric neuronal acetylcholine receptors with CHRNA2, CHRNA3 and CHRNA4, as well as CHRNA5 and CHRNB3 as accesory subunits. CHRNA3:CHRNB4 being predominant in neurons of the autonomic ganglia, it is known as ganglionic nicotinic receptor. CHRNA3:CHRNB4 or CHRNA3:CHRNA5:CHRNB4 play also an important role in the habenulo-interpeduncular tract, modulating the mesolimbic dopamine system and affecting reward circuits and addiction. Hypothalamic CHRNA3:CHRNB4 nAChR activation by nicotine leads to activation of POMC neurons and a decrease in food intake. The polypeptide is Neuronal acetylcholine receptor subunit beta-4 (Chrnb4) (Mus musculus (Mouse)).